Reading from the N-terminus, the 489-residue chain is Glutamate--tRNA ligase (489 aa).

The 'HIGH' region motif lies at 10-20; it reads PSPTGFLHIGG. The 'KMSKS' region signature appears at 261–265; that stretch reads KLSKR. ATP is bound at residue lysine 264.

It belongs to the class-I aminoacyl-tRNA synthetase family. Glutamate--tRNA ligase type 1 subfamily. In terms of assembly, monomer.

Its subcellular location is the cytoplasm. It catalyses the reaction tRNA(Glu) + L-glutamate + ATP = L-glutamyl-tRNA(Glu) + AMP + diphosphate. Catalyzes the attachment of glutamate to tRNA(Glu) in a two-step reaction: glutamate is first activated by ATP to form Glu-AMP and then transferred to the acceptor end of tRNA(Glu). The protein is Glutamate--tRNA ligase of Finegoldia magna (strain ATCC 29328 / DSM 20472 / WAL 2508) (Peptostreptococcus magnus).